The sequence spans 157 residues: ATP synthase subunit b 1 (157 aa).

The chain crosses the membrane as a helical span at residues 7–29 (LFGQMVTFALLVWFTMKYVWPPL).

It belongs to the ATPase B chain family. As to quaternary structure, F-type ATPases have 2 components, F(1) - the catalytic core - and F(0) - the membrane proton channel. F(1) has five subunits: alpha(3), beta(3), gamma(1), delta(1), epsilon(1). F(0) has three main subunits: a(1), b(2) and c(10-14). The alpha and beta chains form an alternating ring which encloses part of the gamma chain. F(1) is attached to F(0) by a central stalk formed by the gamma and epsilon chains, while a peripheral stalk is formed by the delta and b chains.

The protein localises to the cell inner membrane. In terms of biological role, f(1)F(0) ATP synthase produces ATP from ADP in the presence of a proton or sodium gradient. F-type ATPases consist of two structural domains, F(1) containing the extramembraneous catalytic core and F(0) containing the membrane proton channel, linked together by a central stalk and a peripheral stalk. During catalysis, ATP synthesis in the catalytic domain of F(1) is coupled via a rotary mechanism of the central stalk subunits to proton translocation. Functionally, component of the F(0) channel, it forms part of the peripheral stalk, linking F(1) to F(0). The protein is ATP synthase subunit b 1 of Methylococcus capsulatus (strain ATCC 33009 / NCIMB 11132 / Bath).